We begin with the raw amino-acid sequence, 257 residues long: Snake venom serine protease salmonase (257 aa).

Residues 1-18 (MVLIRVLVNFLILQLSYA) form the signal peptide. The propeptide occupies 19 to 24 (QKSSEL). Residues 25 to 248 (VIGGDECNIN…YIDWIQSIIA (224 aa)) enclose the Peptidase S1 domain. Intrachain disulfides connect Cys31/Cys162, Cys49/Cys65, Cys141/Cys209, Cys173/Cys188, and Cys199/Cys224. Catalysis depends on His64, which acts as the Charge relay system. N-linked (GlcNAc...) asparagine glycosylation occurs at Asn78. Asp109 functions as the Charge relay system in the catalytic mechanism. Ser203 functions as the Charge relay system in the catalytic mechanism.

The protein belongs to the peptidase S1 family. Snake venom subfamily. As to quaternary structure, monomer. In terms of tissue distribution, expressed by the venom gland.

Its subcellular location is the secreted. Functionally, snake venom serine protease that may act in the hemostasis system of the prey. This chain is Snake venom serine protease salmonase, found in Gloydius brevicauda (Korean slamosa snake).